A 451-amino-acid chain; its full sequence is MDDENGLELSLGLSLGGTSGKSKARDAPLEPKAEPQVEESSSKGVSQTPEAPFVHYYQTNAENQEHSSKQRHSPAAPPFGNFWGQPGSSSVPVADGSNEQKPVSSKRKLLSEEISFQKKPNTAAEQPDAFSKSSDGGVKNAPISISTDDGSTGENEDVAESEAEGSNSWLVAQREDSAKGSVVNRGSDRKRSSDDAAVGFQGKRQPSFSGSESSSGKLPQGNPLSLQASNVVAVPYQVPSQVSAPPSITNASNFTPVCTVQLRPPTNNGLAVTMGSTSQVAFGYPAVQLPTLETSSSWAFGAPPQAMSSFTAKDKVERAGISQADDGKKTQEAGASSSALVEDDKKSDRALPLMGSAIRPGIAPNVKFGGSGSYPDLPWVSTTGTGPNGRTISGVTYKFGRNEVKIVCACHGTHMTPEEFMRHASADAPGQENSATLPAFPVGNQAASAQN.

3 disordered regions span residues 1-223, 321-346, and 427-451; these read MDDE…QGNP, ISQADDGKKTQEAGASSSALVEDDKK, and DAPGQENSATLPAFPVGNQAASAQN. A compositionally biased stretch (basic and acidic residues) spans 23 to 35; that stretch reads KARDAPLEPKAEP. 3 stretches are compositionally biased toward polar residues: residues 38-49, 86-103, and 143-153; these read EESSSKGVSQTP, PGSSSVPVADGSNEQKPV, and ISISTDDGSTG. The span at 154–163 shows a compositional bias: acidic residues; sequence ENEDVAESEA. Positions 207 to 216 are enriched in low complexity; it reads SFSGSESSSG.

Belongs to the Ninja family. As to quaternary structure, interacts with TIFY10C/JAZ8. Interacts with TIFY11A/JAZ9.

The protein resides in the nucleus. The polypeptide is Protein NINJA homolog 1 (Oryza sativa subsp. japonica (Rice)).